Consider the following 463-residue polypeptide: tRNA-2-methylthio-N(6)-dimethylallyladenosine synthase (463 aa).

The MTTase N-terminal domain maps to 19–135; the sequence is RSYWITTFGC…LENLLGKVDL (117 aa). Positions 28, 64, 98, 170, 174, and 177 each coordinate [4Fe-4S] cluster. A Radical SAM core domain is found at 156-393; sequence RESSICGWVN…NALVEKTARN (238 aa). A TRAM domain is found at 396-463; that stretch reads QRYINNIESV…RPFSLTGELC (68 aa).

It belongs to the methylthiotransferase family. MiaB subfamily. In terms of assembly, monomer. It depends on [4Fe-4S] cluster as a cofactor.

The protein resides in the cytoplasm. The enzyme catalyses N(6)-dimethylallyladenosine(37) in tRNA + (sulfur carrier)-SH + AH2 + 2 S-adenosyl-L-methionine = 2-methylsulfanyl-N(6)-dimethylallyladenosine(37) in tRNA + (sulfur carrier)-H + 5'-deoxyadenosine + L-methionine + A + S-adenosyl-L-homocysteine + 2 H(+). Functionally, catalyzes the methylthiolation of N6-(dimethylallyl)adenosine (i(6)A), leading to the formation of 2-methylthio-N6-(dimethylallyl)adenosine (ms(2)i(6)A) at position 37 in tRNAs that read codons beginning with uridine. In Prochlorococcus marinus (strain MIT 9312), this protein is tRNA-2-methylthio-N(6)-dimethylallyladenosine synthase.